Reading from the N-terminus, the 199-residue chain is MTITVESLKRPEGSKPRALRRSGLIPANLYGHKGTESISLTIEAKTVERLLKRVSVNNTLIELNIADAPWRGKALLRELQIHPAKGTPYHLSFFAVAGHGDTTVEVRLRFVGTAVGVKQEGGVLDTVITELQVSCAPENIPDVIEIDVTNLQIGDSLSISDIPFPEGVTPLAELERLVVSVLPPQISADDAGTETETAS.

The protein belongs to the bacterial ribosomal protein bL25 family. CTC subfamily. As to quaternary structure, part of the 50S ribosomal subunit; part of the 5S rRNA/L5/L18/L25 subcomplex. Contacts the 5S rRNA. Binds to the 5S rRNA independently of L5 and L18.

In terms of biological role, this is one of the proteins that binds to the 5S RNA in the ribosome where it forms part of the central protuberance. The chain is Large ribosomal subunit protein bL25 from Nostoc punctiforme (strain ATCC 29133 / PCC 73102).